The following is a 122-amino-acid chain: Large ribosomal subunit protein uL14 (122 aa).

The protein belongs to the universal ribosomal protein uL14 family. Part of the 50S ribosomal subunit. Forms a cluster with proteins L3 and L19. In the 70S ribosome, L14 and L19 interact and together make contacts with the 16S rRNA in bridges B5 and B8.

Functionally, binds to 23S rRNA. Forms part of two intersubunit bridges in the 70S ribosome. In Rhodococcus jostii (strain RHA1), this protein is Large ribosomal subunit protein uL14.